The following is a 356-amino-acid chain: Heat-inducible transcription repressor HrcA (356 aa).

It belongs to the HrcA family.

Its function is as follows. Negative regulator of class I heat shock genes (grpE-dnaK-dnaJ and groELS operons). Prevents heat-shock induction of these operons. This chain is Heat-inducible transcription repressor HrcA, found in Bartonella quintana (strain Toulouse) (Rochalimaea quintana).